The sequence spans 346 residues: MRVADFSFDLPDELIARYPTAQRNASRLLTLDGPTGALADKQFTDLFEMINPGDLMVFNNTRVIPARLFGQKATGGKLEILVERMLDDKRILAHVRSSKSPKVDTLINLDGEHQMKMIARHDALFELELLSELTILEVLEQVGHMPLPPYIDRPDEDADKERYQTVYNKTPGAVAAPTAGLHFDDAMLSALKHKGVNIAFVTLHVGAGTFQPVRVDNVLEHKMHSEWADVPQDVVDLIAQTKAAGNRVIAVGTTSVRSLESAAKACGDKPLATFSGDTDIFIYPGYEFKVVDAMVTNFHLPESTLIMLISAFTGVDEVRYAYQHAIAQKYRFFSYGDAMFLTKKAQ.

Belongs to the QueA family. Monomer.

It is found in the cytoplasm. It catalyses the reaction 7-aminomethyl-7-carbaguanosine(34) in tRNA + S-adenosyl-L-methionine = epoxyqueuosine(34) in tRNA + adenine + L-methionine + 2 H(+). It participates in tRNA modification; tRNA-queuosine biosynthesis. Functionally, transfers and isomerizes the ribose moiety from AdoMet to the 7-aminomethyl group of 7-deazaguanine (preQ1-tRNA) to give epoxyqueuosine (oQ-tRNA). The polypeptide is S-adenosylmethionine:tRNA ribosyltransferase-isomerase (Shewanella denitrificans (strain OS217 / ATCC BAA-1090 / DSM 15013)).